The chain runs to 265 residues: 3-methyl-2-oxobutanoate hydroxymethyltransferase (265 aa).

Mg(2+) contacts are provided by Asp46 and Asp85. 3-methyl-2-oxobutanoate contacts are provided by residues 46–47 (DS), Asp85, and Lys114. Glu116 is a binding site for Mg(2+). The active-site Proton acceptor is the Glu183.

The protein belongs to the PanB family. Homodecamer; pentamer of dimers. It depends on Mg(2+) as a cofactor.

It is found in the cytoplasm. It catalyses the reaction 3-methyl-2-oxobutanoate + (6R)-5,10-methylene-5,6,7,8-tetrahydrofolate + H2O = 2-dehydropantoate + (6S)-5,6,7,8-tetrahydrofolate. Its pathway is cofactor biosynthesis; coenzyme A biosynthesis. In terms of biological role, catalyzes the reversible reaction in which hydroxymethyl group from 5,10-methylenetetrahydrofolate is transferred onto alpha-ketoisovalerate to form ketopantoate. This chain is 3-methyl-2-oxobutanoate hydroxymethyltransferase, found in Pyrobaculum calidifontis (strain DSM 21063 / JCM 11548 / VA1).